Here is a 380-residue protein sequence, read N- to C-terminus: Cytochrome b (380 aa).

Helical transmembrane passes span phenylalanine 34–methionine 54, tryptophan 78–isoleucine 99, tryptophan 114–leucine 134, and phenylalanine 179–threonine 199. Heme b contacts are provided by histidine 84 and histidine 98. Heme b contacts are provided by histidine 183 and histidine 197. A ubiquinone is bound at residue histidine 202. Helical transmembrane passes span serine 227–serine 247, leucine 289–histidine 309, leucine 321–serine 341, and phenylalanine 348–proline 368.

This sequence belongs to the cytochrome b family. The cytochrome bc1 complex contains 11 subunits: 3 respiratory subunits (MT-CYB, CYC1 and UQCRFS1), 2 core proteins (UQCRC1 and UQCRC2) and 6 low-molecular weight proteins (UQCRH/QCR6, UQCRB/QCR7, UQCRQ/QCR8, UQCR10/QCR9, UQCR11/QCR10 and a cleavage product of UQCRFS1). This cytochrome bc1 complex then forms a dimer. It depends on heme b as a cofactor.

Its subcellular location is the mitochondrion inner membrane. Its function is as follows. Component of the ubiquinol-cytochrome c reductase complex (complex III or cytochrome b-c1 complex) that is part of the mitochondrial respiratory chain. The b-c1 complex mediates electron transfer from ubiquinol to cytochrome c. Contributes to the generation of a proton gradient across the mitochondrial membrane that is then used for ATP synthesis. In Caracara plancus (Southern caracara), this protein is Cytochrome b (MT-CYB).